Consider the following 171-residue polypeptide: Small ribosomal subunit protein uS4 (171 aa).

Residues 101-165 (RRLQTVVYRK…SSLSDELHPE (65 aa)) enclose the S4 RNA-binding domain. The segment at 148–171 (SSVGFDEHSSLSDELHPERAEAQE) is disordered. A compositionally biased stretch (basic and acidic residues) spans 152–171 (FDEHSSLSDELHPERAEAQE).

The protein belongs to the universal ribosomal protein uS4 family. As to quaternary structure, part of the 30S ribosomal subunit. Contacts protein S5. The interaction surface between S4 and S5 is involved in control of translational fidelity.

In terms of biological role, one of the primary rRNA binding proteins, it binds directly to 16S rRNA where it nucleates assembly of the body of the 30S subunit. Functionally, with S5 and S12 plays an important role in translational accuracy. In Haloarcula marismortui (strain ATCC 43049 / DSM 3752 / JCM 8966 / VKM B-1809) (Halobacterium marismortui), this protein is Small ribosomal subunit protein uS4.